A 69-amino-acid chain; its full sequence is DNA gyrase inhibitor YacG (69 aa).

Positions 13, 16, 32, and 36 each coordinate Zn(2+).

This sequence belongs to the DNA gyrase inhibitor YacG family. In terms of assembly, interacts with GyrB. Zn(2+) serves as cofactor.

Functionally, inhibits all the catalytic activities of DNA gyrase by preventing its interaction with DNA. Acts by binding directly to the C-terminal domain of GyrB, which probably disrupts DNA binding by the gyrase. This chain is DNA gyrase inhibitor YacG, found in Neisseria meningitidis serogroup C / serotype 2a (strain ATCC 700532 / DSM 15464 / FAM18).